The chain runs to 190 residues: Mediator of RNA polymerase II transcription subunit 28 (190 aa).

Residues 76–108 (MLIKDENQDLSIEIQRKEALLQKHYNRLEEWKA) are a coiled coil.

It belongs to the Mediator complex subunit 28 family. In terms of assembly, component of the Mediator complex.

It localises to the nucleus. Its function is as follows. Component of the Mediator complex, a coactivator involved in the regulated transcription of nearly all RNA polymerase II-dependent genes. Mediator functions as a bridge to convey information from gene-specific regulatory proteins to the basal RNA polymerase II transcription machinery. Mediator is recruited to promoters by direct interactions with regulatory proteins and serves as a scaffold for the assembly of a functional preinitiation complex with RNA polymerase II and the general transcription factors. This chain is Mediator of RNA polymerase II transcription subunit 28 (MED28), found in Drosophila pseudoobscura pseudoobscura (Fruit fly).